The following is a 349-amino-acid chain: MVTYKDAGVDIYKEDKVIRALASQIKFERTDAIKPADLKGHYAGAIEFGDYYLVLCTDGVGSKMVVAEMANKFDTVPIDMIAMNVNDAICIGAEPVALVDYMAVEDITEDIASQIGKGLNDGIKESNINLIGGETASLPNMIKGVDLAGTVLAVVKKDEIVSGKEVKPGDVIVGLRSSGIHSNGLSLARKVFFDITNLDVNSKLSHGKTVAEELLTPTKIYVKPVLEMIKQVNVKGLAHITGGGFRKLKRLNKDVCYKIDELPEILPIFKEIQNLGNVADQEMFKTFNMGIGFCVIVEKEDAEKIIEIANHHNIPAFVIGKIEDSVEIGGKTKRETVLVEYNNKKMIME.

It belongs to the AIR synthase family.

The protein localises to the cytoplasm. The enzyme catalyses 2-formamido-N(1)-(5-O-phospho-beta-D-ribosyl)acetamidine + ATP = 5-amino-1-(5-phospho-beta-D-ribosyl)imidazole + ADP + phosphate + H(+). It functions in the pathway purine metabolism; IMP biosynthesis via de novo pathway; 5-amino-1-(5-phospho-D-ribosyl)imidazole from N(2)-formyl-N(1)-(5-phospho-D-ribosyl)glycinamide: step 2/2. The protein is Phosphoribosylformylglycinamidine cyclo-ligase of Methanococcus maripaludis (strain C6 / ATCC BAA-1332).